Here is a 149-residue protein sequence, read N- to C-terminus: Nucleoside diphosphate kinase (149 aa).

ATP-binding residues include Lys-9, Phe-57, Arg-85, Thr-91, Arg-102, and Asn-112. The active-site Pros-phosphohistidine intermediate is the His-115.

This sequence belongs to the NDK family. It depends on Mg(2+) as a cofactor.

Its subcellular location is the cytoplasm. It catalyses the reaction a 2'-deoxyribonucleoside 5'-diphosphate + ATP = a 2'-deoxyribonucleoside 5'-triphosphate + ADP. The catalysed reaction is a ribonucleoside 5'-diphosphate + ATP = a ribonucleoside 5'-triphosphate + ADP. Functionally, major role in the synthesis of nucleoside triphosphates other than ATP. The ATP gamma phosphate is transferred to the NDP beta phosphate via a ping-pong mechanism, using a phosphorylated active-site intermediate. The chain is Nucleoside diphosphate kinase from Methanoculleus marisnigri (strain ATCC 35101 / DSM 1498 / JR1).